The chain runs to 278 residues: MEENMEEGQTQKGCFECCIKCLGGIPYASLIATILLYAGVALFCGCGHEALSGTVNILQTYFELARTAGDTLDVFTMIDIFKYVIYGIAAAFFVYGILLMVEGFFTTGAIKDLYGDFKITTCGRCVSAWFIMLTYLFMLAWLGVTAFTSLPVYMYFNVWTICRNTTLVEGANLCLDLRQFGIVTIGEEKKICTASENFLRMCESTELNMTFHLFIVALAGAGAAVIAMVHYLMVLSANWAYVKDACRMQKYEDIKSKEEQELHDIHSTRSKERLNAYT.

N-acetylmethionine is present on methionine 1. Over 1 to 22 (MEENMEEGQTQKGCFECCIKCL) the chain is Cytoplasmic. A helical membrane pass occupies residues 23–43 (GGIPYASLIATILLYAGVALF). At 44-84 (CGCGHEALSGTVNILQTYFELARTAGDTLDVFTMIDIFKYV) the chain is on the extracellular side. Residues 85 to 105 (IYGIAAAFFVYGILLMVEGFF) traverse the membrane as a helical segment. The Cytoplasmic portion of the chain corresponds to 106-127 (TTGAIKDLYGDFKITTCGRCVS). Residues 128-148 (AWFIMLTYLFMLAWLGVTAFT) traverse the membrane as a helical segment. At 149-213 (SLPVYMYFNV…STELNMTFHL (65 aa)) the chain is on the extracellular side. N-linked (GlcNAc...) asparagine glycosylation is present at asparagine 164. A disulfide bond links cysteine 174 and cysteine 192. A glycan (N-linked (GlcNAc...) asparagine) is linked at asparagine 208. A helical transmembrane segment spans residues 214–234 (FIVALAGAGAAVIAMVHYLMV). The Cytoplasmic portion of the chain corresponds to 235–278 (LSANWAYVKDACRMQKYEDIKSKEEQELHDIHSTRSKERLNAYT). Serine 256 is modified (phosphoserine). Threonine 278 bears the Phosphothreonine mark.

This sequence belongs to the myelin proteolipid protein family. As to quaternary structure, interacts with OPRM1. Interacts with palmitoyltransferase ZDHHC17/HIP14; the interaction leads to palmitoylation of GPM6A. Post-translationally, N-glycosylated. Palmitoylated by ZDHHC17/HIP14. Widely expressed in the CNS. Found especially in the granule cell layer of the cerebellum but not in the molecular layer or white matter. Expressed in the immature embryonic retina including the nerve fiber layer (NFL), inner plexiform layer (IPL), and outer plexiform layer (OPL). Weakly expressed in processes of Mueller glia cells.

It is found in the cell membrane. It localises to the cell projection. The protein localises to the axon. The protein resides in the growth cone. Its subcellular location is the dendritic spine. It is found in the filopodium. It localises to the neuron projection. Functionally, involved in neuronal differentiation, including differentiation and migration of neuronal stem cells. Plays a role in neuronal plasticity and is involved in neurite and filopodia outgrowth, filopodia motility and probably synapse formation. Gpm6a-induced filopodia formation involves mitogen-activated protein kinase (MAPK) and Src signaling pathways. Conflictingly, PubMed:22162747 reports that induced cellular protrusions are simple membrane-wrapped tubules without actin or tubulin-based cytoskeletons and with Gpm6a gliding along membrane edges indicative for a function in actin-independent membrane deformation. May be involved in neuronal NGF-dependent Ca(2+) influx. May be involved in regulation of endocytosis and intracellular trafficking of G-protein-coupled receptors (GPCRs); enhances internalization and recycling of mu-type opioid receptor. In Mus musculus (Mouse), this protein is Neuronal membrane glycoprotein M6-a (Gpm6a).